The chain runs to 61 residues: Large ribosomal subunit protein uL30 (61 aa).

The protein belongs to the universal ribosomal protein uL30 family. In terms of assembly, part of the 50S ribosomal subunit.

This chain is Large ribosomal subunit protein uL30, found in Chromobacterium violaceum (strain ATCC 12472 / DSM 30191 / JCM 1249 / CCUG 213 / NBRC 12614 / NCIMB 9131 / NCTC 9757 / MK).